We begin with the raw amino-acid sequence, 637 residues long: Phosphomethylpyrimidine synthase (637 aa).

Substrate is bound by residues asparagine 242, methionine 271, tyrosine 300, histidine 336, 356–358 (SRG), 397–400 (DGLR), and glutamate 436. Histidine 440 is a Zn(2+) binding site. Residue tyrosine 463 coordinates substrate. Histidine 504 lines the Zn(2+) pocket. [4Fe-4S] cluster-binding residues include cysteine 584, cysteine 587, and cysteine 592.

It belongs to the ThiC family. Homodimer. [4Fe-4S] cluster is required as a cofactor.

The catalysed reaction is 5-amino-1-(5-phospho-beta-D-ribosyl)imidazole + S-adenosyl-L-methionine = 4-amino-2-methyl-5-(phosphooxymethyl)pyrimidine + CO + 5'-deoxyadenosine + formate + L-methionine + 3 H(+). The protein operates within cofactor biosynthesis; thiamine diphosphate biosynthesis. In terms of biological role, catalyzes the synthesis of the hydroxymethylpyrimidine phosphate (HMP-P) moiety of thiamine from aminoimidazole ribotide (AIR) in a radical S-adenosyl-L-methionine (SAM)-dependent reaction. In Bordetella pertussis (strain Tohama I / ATCC BAA-589 / NCTC 13251), this protein is Phosphomethylpyrimidine synthase.